The following is a 304-amino-acid chain: Small ribosomal subunit biogenesis GTPase RsgA (304 aa).

Residues 78–237 (HSFLTRPPVA…VADTPGFNRP (160 aa)) enclose the CP-type G domain. GTP is bound by residues 127 to 130 (TKTD) and 179 to 187 (GPSGVGKSS). Residues cysteine 262, cysteine 267, histidine 269, and cysteine 275 each contribute to the Zn(2+) site.

The protein belongs to the TRAFAC class YlqF/YawG GTPase family. RsgA subfamily. Monomer. Associates with 30S ribosomal subunit, binds 16S rRNA. Requires Zn(2+) as cofactor.

It localises to the cytoplasm. Its function is as follows. One of several proteins that assist in the late maturation steps of the functional core of the 30S ribosomal subunit. Helps release RbfA from mature subunits. May play a role in the assembly of ribosomal proteins into the subunit. Circularly permuted GTPase that catalyzes slow GTP hydrolysis, GTPase activity is stimulated by the 30S ribosomal subunit. In Synechococcus sp. (strain CC9605), this protein is Small ribosomal subunit biogenesis GTPase RsgA.